We begin with the raw amino-acid sequence, 523 residues long: Amino acid transporter protein 6 (523 aa).

Topologically, residues 1–19 (MLNVFGVSASMPDDSRSQK) are cytoplasmic. A helical membrane pass occupies residues 20–40 (MGLLGAISYIVGNIVGSGIFI). The Extracellular segment spans residues 41-51 (TPTSIIENVNS). The chain crosses the membrane as a helical span at residues 52 to 72 (VGLSLAIWILAAFISMLGSFC). Residues 73–86 (YVELGTSIRLSGGD) are Cytoplasmic-facing. Residues 87–107 (FAYLCFMKWYPVAFAFMCIGC) form a helical membrane-spanning segment. Topologically, residues 108–145 (TINYPATLAVQAQTFAEYVFRGAGVELDETSEFWAKKL) are extracellular. A helical membrane pass occupies residues 146–166 (LGFSLIILLMFMNFFSLKTFV). At 167–173 (QRFSILA) the chain is on the cytoplasmic side. The chain crosses the membrane as a helical span at residues 174-194 (SLAKIAATLLIIITGFYYLIF). The Extracellular segment spans residues 195 to 214 (KHWKQNLEEPFKGSNWNPGP). Residues 215 to 235 (FVNALFAGLFSYDGWDILNFG) form a helical membrane-spanning segment. Topologically, residues 236–249 (AEEIENPKRTMPLS) are cytoplasmic. Residues 250-270 (IIIGMTCIGVIYVAVNVAYSI) traverse the membrane as a helical segment. Topologically, residues 271–290 (VLSPTEMIASNAVAIDFANK) are extracellular. N-linked (GlcNAc...) asparagine glycosylation is present at Asn-289. The chain crosses the membrane as a helical span at residues 291-311 (TLGAAAFVVPVMVAILLIGSL). The Cytoplasmic segment spans residues 312–348 (NSTMFSASRYLQAVSRQGHIPSAISGIAPNCDSPRVA). The chain crosses the membrane as a helical span at residues 349–369 (LLVHILIAIAVSFLGDPDKLI). Over 370 to 404 (NYVAFAQWSQRAFTMSALLYLRIRGRPRHPDRIQL) the chain is Extracellular. A helical membrane pass occupies residues 405-425 (PIIMPILFFLVCTSMVVISII). Residues 426–429 (DDFK) lie on the Cytoplasmic side of the membrane. Residues 430–450 (SSAVGLGILLGGLIIFIIFVW) form a helical membrane-spanning segment. Residues 451 to 523 (DRALPSSHTF…GNGQFKCTRM (73 aa)) are Extracellular-facing. Asn-462 is a glycosylation site (N-linked (GlcNAc...) asparagine). Residues 521 to 523 (TRM) carry the PDZ-binding motif motif.

The protein belongs to the amino acid-polyamine-organocation (APC) superfamily. As to quaternary structure, interacts (via PDZ-binding motif) with nfrl-1 (via PDZ 2 domain); the interaction with nrfl-1 is required to sequester aat-6 to the apical cell membrane of intestinal cells. In terms of tissue distribution, expressed at the apical cell membrane of intestinal cells.

The protein resides in the apical cell membrane. In terms of biological role, amino acid transporter that mediates the uptake of the L-enantiomers of various amino acids, including L-glutamate. May play a role in promoting fertility. The sequence is that of Amino acid transporter protein 6 from Caenorhabditis elegans.